A 200-amino-acid chain; its full sequence is TATA-box-binding protein (200 aa).

2 repeat units span residues Leu25–Ile101 and Ile115–Leu192.

It belongs to the TBP family. In terms of assembly, belongs to the TFIID complex together with the TBP-associated factors (TAFs). Binds DNA as monomer.

The protein resides in the nucleus. Functionally, general transcription factor that functions at the core of the DNA-binding multiprotein factor TFIID. Binding of TFIID to the TATA box is the initial transcriptional step of the pre-initiation complex (PIC), playing a role in the activation of eukaryotic genes transcribed by RNA polymerase II. This is TATA-box-binding protein from Mesembryanthemum crystallinum (Common ice plant).